The primary structure comprises 72 residues: MKKDIHPKAVPTKIIYQGKVVMETLSTRPEIHVDVWSGVHPFWTGEERFVDTEGRVDKFNKRFGDSYRNKKK.

The protein belongs to the bacterial ribosomal protein bL31 family. Type A subfamily. As to quaternary structure, part of the 50S ribosomal subunit.

In terms of biological role, binds the 23S rRNA. The sequence is that of Large ribosomal subunit protein bL31 from Deinococcus deserti (strain DSM 17065 / CIP 109153 / LMG 22923 / VCD115).